Consider the following 228-residue polypeptide: UPF0173 metal-dependent hydrolase LMOf2365_1599 (228 aa).

This sequence belongs to the UPF0173 family.

In Listeria monocytogenes serotype 4b (strain F2365), this protein is UPF0173 metal-dependent hydrolase LMOf2365_1599.